A 70-amino-acid polypeptide reads, in one-letter code: DNA-directed RNA polymerase subunit omega (70 aa).

It belongs to the RNA polymerase subunit omega family. In terms of assembly, the RNAP catalytic core consists of 2 alpha, 1 beta, 1 beta' and 1 omega subunit. When a sigma factor is associated with the core the holoenzyme is formed, which can initiate transcription.

It carries out the reaction RNA(n) + a ribonucleoside 5'-triphosphate = RNA(n+1) + diphosphate. Promotes RNA polymerase assembly. Latches the N- and C-terminal regions of the beta' subunit thereby facilitating its interaction with the beta and alpha subunits. The sequence is that of DNA-directed RNA polymerase subunit omega from Marinobacter nauticus (strain ATCC 700491 / DSM 11845 / VT8) (Marinobacter aquaeolei).